A 479-amino-acid polypeptide reads, in one-letter code: PRAME family member 18 (479 aa).

One copy of the LRR 1 repeat lies at 15–38; the sequence is QSLLRDQALAISVLDELPRELFPP. One copy of the LRR 1; degenerate repeat lies at 97 to 124; the sequence is RWKLQVLEMRDVDENFWTIWSGARLLSC. An LRR 2; degenerate repeat occupies 179-203; sequence HLCCTKVVNYSMSILNFRNILETVY. Residues 204-230 form an LRR 3; degenerate repeat; it reads PDSIQVLEIWNMCWLCMIVEFSRYLSQ. The stretch at 231-265 is one LRR 4; degenerate repeat; it reads MRNLRKLFISDGCRYLLSSDSQEQLVAEFSSVLLR. LRR repeat units lie at residues 266 to 291, 292 to 323, 324 to 342, 348 to 375, and 376 to 400; these read LENLQMLYVRRVCFFRGHLDQLIRCL, RSPLETLALTYGFLEEEDLKCLPRYPSLSQLK, QLNLSHGALRFIRLEPLRA, AATLQTLFLVDCGIGYSKLRVILPALSR, and CSNLTTFCFHGNDTSMDALKDLLRH.

Belongs to the PRAME family.

This chain is PRAME family member 18, found in Homo sapiens (Human).